The following is a 127-amino-acid chain: Large ribosomal subunit protein bL12 (127 aa).

Lysine 77 and lysine 88 each carry N6-methyllysine.

It belongs to the bacterial ribosomal protein bL12 family. Homodimer. Part of the ribosomal stalk of the 50S ribosomal subunit. Forms a multimeric L10(L12)X complex, where L10 forms an elongated spine to which 2 to 4 L12 dimers bind in a sequential fashion. Binds GTP-bound translation factors.

Its function is as follows. Forms part of the ribosomal stalk which helps the ribosome interact with GTP-bound translation factors. Is thus essential for accurate translation. The chain is Large ribosomal subunit protein bL12 from Nitratidesulfovibrio vulgaris (strain DSM 19637 / Miyazaki F) (Desulfovibrio vulgaris).